The chain runs to 495 residues: Solute carrier family 2, facilitated glucose transporter member 3 (495 aa).

The Cytoplasmic segment spans residues 1-10; the sequence is MGTQKVTVSL. Residues 11-32 traverse the membrane as a helical segment; it reads IFALSIATIGSFQFGYNTGVIN. At 33–64 the chain is on the extracellular side; sequence APETIIKDFLNYTLEEKSENLPTEVLLTSLWS. Residue Asn-43 is glycosylated (N-linked (GlcNAc...) asparagine). The helical transmembrane segment at 65–85 threads the bilayer; sequence LSVAIFSVGGMIGSFSVGLFV. Topologically, residues 86 to 90 are cytoplasmic; that stretch reads NRFGR. The chain crosses the membrane as a helical span at residues 91-111; the sequence is RNSMLMVNLLAVAGGCLMGFC. Over 112–118 the chain is Extracellular; the sequence is KIAQSVE. Residues 119 to 142 traverse the membrane as a helical segment; it reads MLILGRLIIGLFCGLCTGFVPMYI. Residues 143–153 lie on the Cytoplasmic side of the membrane; that stretch reads GEISPTALRGA. A helical membrane pass occupies residues 154 to 174; sequence FGTLNQLGIVIGILVAQIFGL. Gln-159 serves as a coordination point for D-glucose. At 175-183 the chain is on the extracellular side; that stretch reads KVIMGTEEL. The helical transmembrane segment at 184–204 threads the bilayer; sequence WPLLLGFTIIPAVLQSAALPF. At 205-269 the chain is on the cytoplasmic side; sequence CPESPRFLLI…LFRSRSYRQP (65 aa). The residue at position 232 (Thr-232) is a Phosphothreonine. A helical membrane pass occupies residues 270-290; sequence IIISIMLQLSQQLSGINAVFY. Residues 277 to 279 are important for selectivity against fructose; that stretch reads QLS. D-glucose-binding positions include 280–281 and Asn-286; that span reads QQ. The Extracellular segment spans residues 291–304; the sequence is YSTGIFKDAGVEEP. Residues 305-325 traverse the membrane as a helical segment; that stretch reads IYATIGAGVVNTIFTVVSLFL. A D-glucose-binding site is contributed by Asn-315. Residues 326–331 lie on the Cytoplasmic side of the membrane; sequence VERAGR. A helical transmembrane segment spans residues 332-352; it reads RTLHMIGLGGMAVCSILMTIS. Residues 353 to 363 lie on the Extracellular side of the membrane; the sequence is LLLKDNYNWMS. The chain crosses the membrane as a helical span at residues 364-389; the sequence is FVCIGAILVFVAFFEIGPGPIPWFIV. The D-glucose site is built by Glu-378 and Trp-386. Residues 390 to 399 are Cytoplasmic-facing; the sequence is AELFSQGPRP. The chain crosses the membrane as a helical span at residues 400–420; that stretch reads AAMAVAGCSNWTSNFLVGLLF. The Extracellular segment spans residues 421–429; the sequence is PSAAFYLGA. A helical transmembrane segment spans residues 430–450; the sequence is YVFIIFTGFLIVFLVFTFFKV. Residues 451 to 495 lie on the Cytoplasmic side of the membrane; it reads PETRGRTFEEITRAFEGQGQDANRAEKGPIVEMNSMQPVKETATV. Ser-485 is modified (phosphoserine). Phosphothreonine is present on Thr-492.

This sequence belongs to the major facilitator superfamily. Sugar transporter (TC 2.A.1.1) family. Glucose transporter subfamily. Interacts with SMIM43; the interaction may promote SLC2A3-mediated glucose transport to meet the energy needs of mesendoderm differentiation.

Its subcellular location is the cell membrane. It localises to the perikaryon. It is found in the cell projection. The enzyme catalyses D-glucose(out) = D-glucose(in). It carries out the reaction D-galactose(in) = D-galactose(out). Its activity is regulated as follows. Deoxyglucose transport is inhibited by D-glucose, D-galactose and maltose. Galactose transport is inhibited by D-glucose and maltose. Its function is as follows. Facilitative glucose transporter. Can also mediate the uptake of various other monosaccharides across the cell membrane. Mediates the uptake of glucose, 2-deoxyglucose, galactose, mannose, xylose and fucose, and probably also dehydroascorbate. Does not mediate fructose transport. Required for mesendoderm differentiation. This Canis lupus familiaris (Dog) protein is Solute carrier family 2, facilitated glucose transporter member 3.